We begin with the raw amino-acid sequence, 99 residues long: Large ribosomal subunit protein bL21 (99 aa).

Belongs to the bacterial ribosomal protein bL21 family. Part of the 50S ribosomal subunit. Contacts protein L20.

Functionally, this protein binds to 23S rRNA in the presence of protein L20. This Deinococcus geothermalis (strain DSM 11300 / CIP 105573 / AG-3a) protein is Large ribosomal subunit protein bL21.